A 199-amino-acid chain; its full sequence is IMP cyclohydrolase (199 aa).

This sequence belongs to the archaeal IMP cyclohydrolase family.

It catalyses the reaction IMP + H2O = 5-formamido-1-(5-phospho-D-ribosyl)imidazole-4-carboxamide. It functions in the pathway purine metabolism; IMP biosynthesis via de novo pathway; IMP from 5-formamido-1-(5-phospho-D-ribosyl)imidazole-4-carboxamide: step 1/1. In terms of biological role, catalyzes the cyclization of 5-formylamidoimidazole-4-carboxamide ribonucleotide to IMP. This Methanothrix thermoacetophila (strain DSM 6194 / JCM 14653 / NBRC 101360 / PT) (Methanosaeta thermophila) protein is IMP cyclohydrolase.